Here is a 394-residue protein sequence, read N- to C-terminus: Na(+)/H(+) antiporter NhaA (394 aa).

Transmembrane regions (helical) follow at residues 14–34 (AGGL…NSAL), 59–79 (LLLW…GLEV), 95–115 (VFPA…YLLF), 125–145 (GWAI…ALLG), 154–174 (VFLL…IALF), 179–199 (VSLQ…YMNW), 213–233 (LVLW…GVIV), 254–274 (GLHP…NAGV), 292–312 (IATG…WLAV), 328–348 (IFAV…IASL), and 363–383 (LGIL…LRLV).

Belongs to the NhaA Na(+)/H(+) (TC 2.A.33) antiporter family.

It is found in the cell inner membrane. The catalysed reaction is Na(+)(in) + 2 H(+)(out) = Na(+)(out) + 2 H(+)(in). Its function is as follows. Na(+)/H(+) antiporter that extrudes sodium in exchange for external protons. This Yersinia pseudotuberculosis serotype IB (strain PB1/+) protein is Na(+)/H(+) antiporter NhaA.